The following is a 316-amino-acid chain: Porphobilinogen deaminase (316 aa).

Position 245 is an S-(dipyrrolylmethanemethyl)cysteine (C245).

Belongs to the HMBS family. Monomer. It depends on dipyrromethane as a cofactor.

It carries out the reaction 4 porphobilinogen + H2O = hydroxymethylbilane + 4 NH4(+). The protein operates within porphyrin-containing compound metabolism; protoporphyrin-IX biosynthesis; coproporphyrinogen-III from 5-aminolevulinate: step 2/4. Its pathway is porphyrin-containing compound metabolism; chlorophyll biosynthesis. In terms of biological role, tetrapolymerization of the monopyrrole PBG into the hydroxymethylbilane pre-uroporphyrinogen in several discrete steps. The sequence is that of Porphobilinogen deaminase from Prochlorococcus marinus subsp. pastoris (strain CCMP1986 / NIES-2087 / MED4).